The sequence spans 718 residues: Tegument protein UL46 (718 aa).

Disordered stretches follow at residues 433-510 (SAGP…EPPA) and 581-611 (TADD…DDES). Residues 444–454 (GPGGHRAGGGT) show a composition bias toward gly residues. Over residues 455-467 (CREKIQRARRDNE) the composition is skewed to basic and acidic residues.

The protein belongs to the herpesviridae HHV-1 VP11/12 protein family. Interacts with VP16. Interacts with host LCK, PIK3R1, SHC1 AND GRB2; these interactions promote the activation of the PI3K/AKT pathway. Interacts with host YWHAB. Interacts with ICP0; this interaction targets UL46 for degradation by the proteasome. Interacts (via N-terminus) with host TMEM173. Interacts (via C-terminus) with host TBK1. Interacts with host DOK2. In terms of processing, phosphorylated by host LCK. The phosphorylation seems to be lymphocyte-specific.

It is found in the virion tegument. Its subcellular location is the host cytoplasm. The protein localises to the host cell membrane. In terms of biological role, plays a role in the activation of the host PI3K/AKT pathway to promote cell survival. Interacts with and activates host LCK and thereby recruits downstream partners SHC1, GRB2 and PI3KR1 in order to activate the PI3K pathway by phosphorylating host AKT on its activating residues. This mechanism is inhibited by the viral protein US3 that instead promotes incorporation of UL46 into virions. Plays a role in the inhibition of TMEM173/STING-mediated type I interferon production. Interacts with host DOK2 and induces its degradation. This immune evasion mechanism to inactivate T-cells may play an important role during pathogenesis. The protein is Tegument protein UL46 of Homo sapiens (Human).